Reading from the N-terminus, the 165-residue chain is Protein NKG7 (165 aa).

A run of 4 helical transmembrane segments spans residues 9-29, 61-81, 92-112, and 133-153; these read LLGGSLGLMFCLIALSTDFWF, FSIMAVLWALVSVSFLVLSCF, LVSTTAAFAAAISMVVAMAVY, and FYLGWVSAILLLCTGALSLGA.

This sequence belongs to the PMP-22/EMP/MP20 family. Expressed in activated T-cells, in kidney, liver, lung and pancreas. Not expressed in brain, heart, or skeletal muscle. Expressed at high levels in TCR gamma delta-expressing CTL clones, and in some TCR alpha beta-expressing CTL clones (both CD4+ and CD8+), but is not expressed in other TCR alpha beta-expressing CTL clones and in cell lines representing B-cells, monocytes, and myeloid cells.

It localises to the cell membrane. The protein localises to the cytolytic granule membrane. Functionally, regulates cytotoxic granule exocytosis in effector lymphocytes, thus acting as a critical mediator of inflammation in a broad range of infectious and non-infectious diseases. Essential for cytotoxic degranulation of natural killer (NK) cells and CD8(+) T-cells and for the activation of CD4(+) T-cells following infection. Plays a critical role in CD8(+) T-cell and NK cell-mediated cytolysis of target cells and contributes to the cytolytic activity via the perforin/granzyme pathway by enhancing exocytosis of LAMP1-carrying lytic granules. Contributes to NK cell-mediated control of cancer metastasis. This chain is Protein NKG7 (NKG7), found in Homo sapiens (Human).